We begin with the raw amino-acid sequence, 82 residues long: ATP synthase subunit c, chloroplastic (82 aa).

2 helical membrane passes run 7–27 (GASV…PGIG) and 57–77 (LAFM…LLFA).

The protein belongs to the ATPase C chain family. As to quaternary structure, F-type ATPases have 2 components, F(1) - the catalytic core - and F(0) - the membrane proton channel. F(1) has five subunits: alpha(3), beta(3), gamma(1), delta(1), epsilon(1). F(0) has four main subunits: a(1), b(1), b'(1) and c(10-14). The alpha and beta chains form an alternating ring which encloses part of the gamma chain. F(1) is attached to F(0) by a central stalk formed by the gamma and epsilon chains, while a peripheral stalk is formed by the delta, b and b' chains.

The protein resides in the plastid. It is found in the chloroplast thylakoid membrane. In terms of biological role, f(1)F(0) ATP synthase produces ATP from ADP in the presence of a proton or sodium gradient. F-type ATPases consist of two structural domains, F(1) containing the extramembraneous catalytic core and F(0) containing the membrane proton channel, linked together by a central stalk and a peripheral stalk. During catalysis, ATP synthesis in the catalytic domain of F(1) is coupled via a rotary mechanism of the central stalk subunits to proton translocation. Key component of the F(0) channel; it plays a direct role in translocation across the membrane. A homomeric c-ring of between 10-14 subunits forms the central stalk rotor element with the F(1) delta and epsilon subunits. This Emiliania huxleyi (Coccolithophore) protein is ATP synthase subunit c, chloroplastic.